Here is an 808-residue protein sequence, read N- to C-terminus: Probable potassium transporter 3 (808 aa).

At 1 to 34 (MPVADCESGLSPADVTGAGAANGNPGHWRSYYRH) the chain is on the cytoplasmic side. Residues 35-55 (VLLLAYQSCGVVYGDLSTSPL) form a helical membrane-spanning segment. At 56-81 (YVYKSTFIIGSLRRFQDEEIVFGVFS) the chain is on the extracellular side. The chain crosses the membrane as a helical span at residues 82-102 (LVFWTLTLIPLLKYVFIVLAA). Residues 103–167 (DDNGEGGTFA…FLENHRKSRT (65 aa)) lie on the Cytoplasmic side of the membrane. Residues 168-188 (FLLVTVLFGASLVIGDGVLTP) traverse the membrane as a helical segment. Residues 189 to 204 (PMSVLSSFSGLQVHST) are Extracellular-facing. Residues 205–225 (ALTSGEVEILSCTVLVCLFMV) form a helical membrane-spanning segment. The Cytoplasmic portion of the chain corresponds to 226–232 (QHWGTHR). The helical transmembrane segment at 233-253 (VAFLFAPVVIVWLLLLGALGV) threads the bilayer. Topologically, residues 254-283 (YNIVVWNPRVLRALSPYYLVRFFQHTGKDG) are extracellular. The chain crosses the membrane as a helical span at residues 284–304 (WISLGGILLSMTGTEAMYADL). At 305–313 (GHFTAASIR) the chain is on the cytoplasmic side. Residues 314–334 (VAFVGLIYPCLVLQYMGQAAF) form a helical membrane-spanning segment. The Extracellular segment spans residues 335-354 (LSKSPHCDIHFVFFESIPTG). The chain crosses the membrane as a helical span at residues 355–375 (IFWPVLVIATLAAIVGSQAVI). The Cytoplasmic segment spans residues 376–406 (SATFSIVRQCTALGCFPRVKIVHTSRRIHGQ). The helical transmembrane segment at 407–427 (IYSPEINWILMLLCIAVTMGL) threads the bilayer. The Extracellular portion of the chain corresponds to 428–439 (RDTTLIGNAYGM). Residues 440–460 (ACAGVMLVTTLLMALVIVFVW) traverse the membrane as a helical segment. Residues 461-464 (QYSC) are Cytoplasmic-facing. Residues 465–485 (LVAALFLVAFGVVEAVYLSAA) traverse the membrane as a helical segment. Topologically, residues 486-491 (LMKVPQ) are extracellular. Residues 492-512 (GGWLPLVLSLVFVAVMYVWHY) form a helical membrane-spanning segment. The Cytoplasmic portion of the chain corresponds to 513–808 (GTRRKHQFDV…LIEVGMIYYV (296 aa)).

This sequence belongs to the HAK/KUP transporter (TC 2.A.72.3) family.

The protein localises to the membrane. Its function is as follows. High-affinity potassium transporter. The polypeptide is Probable potassium transporter 3 (HAK3) (Oryza sativa subsp. japonica (Rice)).